The sequence spans 156 residues: MNINATLIGQSVAFLIFVLFCMKYVWPPVITALQERQKKIADGLDAANRAARDLELAQEKAGQQLREAKAQAAEIIEQSKKRAAQLVEEARDQARVEADRVKAQALAEIEQELNSAKDALRAQVGALAVGGAEKILGATIDQNAHAELVNKLAAEI.

The helical transmembrane segment at 12-32 (VAFLIFVLFCMKYVWPPVITA) threads the bilayer.

The protein belongs to the ATPase B chain family. As to quaternary structure, F-type ATPases have 2 components, F(1) - the catalytic core - and F(0) - the membrane proton channel. F(1) has five subunits: alpha(3), beta(3), gamma(1), delta(1), epsilon(1). F(0) has three main subunits: a(1), b(2) and c(10-14). The alpha and beta chains form an alternating ring which encloses part of the gamma chain. F(1) is attached to F(0) by a central stalk formed by the gamma and epsilon chains, while a peripheral stalk is formed by the delta and b chains.

It is found in the cell inner membrane. Its function is as follows. F(1)F(0) ATP synthase produces ATP from ADP in the presence of a proton or sodium gradient. F-type ATPases consist of two structural domains, F(1) containing the extramembraneous catalytic core and F(0) containing the membrane proton channel, linked together by a central stalk and a peripheral stalk. During catalysis, ATP synthesis in the catalytic domain of F(1) is coupled via a rotary mechanism of the central stalk subunits to proton translocation. In terms of biological role, component of the F(0) channel, it forms part of the peripheral stalk, linking F(1) to F(0). The sequence is that of ATP synthase subunit b from Pseudomonas putida (strain GB-1).